The chain runs to 244 residues: Prolactin-7D1 (244 aa).

Residues Met-1–Ser-30 form the signal peptide. Disulfide bonds link Cys-99/Cys-215 and Cys-232/Cys-240.

The protein belongs to the somatotropin/prolactin family.

It localises to the secreted. The sequence is that of Prolactin-7D1 (Prl7d1) from Mus musculus (Mouse).